We begin with the raw amino-acid sequence, 307 residues long: Opsin-like protein carO (307 aa).

The N-linked (GlcNAc...) asparagine glycan is linked to Asn28. 7 helical membrane passes run 36-56 (WYWAVCAVMTVSTFAFLGLGM), 64-84 (IFHYITAGITMIASIAYFTMA), 118-138 (WFLTTPLLLTDLLLTAGMPWP), 140-160 (VLWVILVDWVMIVTGLVGALV), 166-186 (WGYFAFGCAALAYIVYVLAWE), 202-222 (FVMCGSLTAVVWILYPIAWGV), and 235-255 (AVFYGILDLIAKPVFGALLLW). The segment at 280–307 (GPNNKVASGHGARNDTATASGSNVNPNA) is disordered. The N-linked (GlcNAc...) asparagine glycan is linked to Asn293. Residues 294-307 (DTATASGSNVNPNA) are compositionally biased toward polar residues.

The protein belongs to the archaeal/bacterial/fungal opsin family.

Its subcellular location is the membrane. Its function is as follows. Opsin-like protein; part of the car gene cluster that mediates the biosynthesis of neurosporaxanthin, a carboxylic apocarotenoid acting as an essential protective pigment and leading to orange pigmentation. The exact role of carO in carotenoid biosynthesis is not known yet, but it could be involved in the regulation of the pathway by light or other stimuli. The protein is Opsin-like protein carO of Fusarium fujikuroi (Bakanae and foot rot disease fungus).